The sequence spans 319 residues: Thioredoxin reductase (319 aa).

36–43 contacts FAD; the sequence is TGTNKGGQ. A disulfide bridge connects residues C136 and C139. 288-297 lines the FAD pocket; sequence DVIDHVYRQA.

This sequence belongs to the class-II pyridine nucleotide-disulfide oxidoreductase family. Homodimer. FAD serves as cofactor.

Its subcellular location is the cytoplasm. The enzyme catalyses [thioredoxin]-dithiol + NADP(+) = [thioredoxin]-disulfide + NADPH + H(+). The chain is Thioredoxin reductase (trxB) from Buchnera aphidicola subsp. Acyrthosiphon pisum (strain APS) (Acyrthosiphon pisum symbiotic bacterium).